Reading from the N-terminus, the 240-residue chain is UDP-2,3-diacylglucosamine hydrolase (240 aa).

Residues Asp8, His10, Asp41, Asn79, and His114 each coordinate Mn(2+). 79 to 80 (NR) contacts substrate. Substrate is bound by residues Asp122, Ser160, Asn164, Lys167, and His195. Positions 195 and 197 each coordinate Mn(2+).

This sequence belongs to the LpxH family. The cofactor is Mn(2+).

The protein localises to the cell inner membrane. The catalysed reaction is UDP-2-N,3-O-bis[(3R)-3-hydroxytetradecanoyl]-alpha-D-glucosamine + H2O = 2-N,3-O-bis[(3R)-3-hydroxytetradecanoyl]-alpha-D-glucosaminyl 1-phosphate + UMP + 2 H(+). Its pathway is glycolipid biosynthesis; lipid IV(A) biosynthesis; lipid IV(A) from (3R)-3-hydroxytetradecanoyl-[acyl-carrier-protein] and UDP-N-acetyl-alpha-D-glucosamine: step 4/6. Functionally, hydrolyzes the pyrophosphate bond of UDP-2,3-diacylglucosamine to yield 2,3-diacylglucosamine 1-phosphate (lipid X) and UMP by catalyzing the attack of water at the alpha-P atom. Involved in the biosynthesis of lipid A, a phosphorylated glycolipid that anchors the lipopolysaccharide to the outer membrane of the cell. The sequence is that of UDP-2,3-diacylglucosamine hydrolase from Yersinia pseudotuberculosis serotype O:1b (strain IP 31758).